The chain runs to 330 residues: Cyclin-dependent kinase 7 (330 aa).

Residues 5–289 (YDTIKHLGEG…CTQSLQMEYF (285 aa)) form the Protein kinase domain. ATP-binding positions include 11 to 19 (LGEGQFANV) and K34. D130 acts as the Proton acceptor in catalysis. T163 is modified (phosphothreonine). The tract at residues 305 to 330 (KKQQPQKRSRRLDDDGTRPVRRLNFD) is disordered. A compositionally biased stretch (basic and acidic residues) spans 315-330 (RLDDDGTRPVRRLNFD).

This sequence belongs to the protein kinase superfamily. CMGC Ser/Thr protein kinase family. CDC2/CDKX subfamily. Catalytic component which, in association with cyclin H (cyh-1) and mat1, is likely to form the CAK complex.

It catalyses the reaction L-seryl-[protein] + ATP = O-phospho-L-seryl-[protein] + ADP + H(+). The enzyme catalyses L-threonyl-[protein] + ATP = O-phospho-L-threonyl-[protein] + ADP + H(+). The catalysed reaction is [DNA-directed RNA polymerase] + ATP = phospho-[DNA-directed RNA polymerase] + ADP + H(+). In terms of biological role, serine/threonine kinase involved in cell cycle control and in RNA polymerase II-mediated RNA transcription. Required for maintaining chromosome ploidy. May phosphorylate the large subunit of RNA polymerase II, ama-1. This Caenorhabditis elegans protein is Cyclin-dependent kinase 7.